We begin with the raw amino-acid sequence, 159 residues long: Ribosomal RNA large subunit methyltransferase H (159 aa).

Residues leucine 76, glycine 108, and 127 to 132 (FSKMTF) contribute to the S-adenosyl-L-methionine site.

The protein belongs to the RNA methyltransferase RlmH family. Homodimer.

Its subcellular location is the cytoplasm. It carries out the reaction pseudouridine(1915) in 23S rRNA + S-adenosyl-L-methionine = N(3)-methylpseudouridine(1915) in 23S rRNA + S-adenosyl-L-homocysteine + H(+). Specifically methylates the pseudouridine at position 1915 (m3Psi1915) in 23S rRNA. The protein is Ribosomal RNA large subunit methyltransferase H of Staphylococcus saprophyticus subsp. saprophyticus (strain ATCC 15305 / DSM 20229 / NCIMB 8711 / NCTC 7292 / S-41).